A 449-amino-acid chain; its full sequence is Tubulin alpha-1 chain (449 aa).

GTP-binding residues include Gln11, Glu71, Ser140, Gly144, Thr145, Thr179, Asn206, and Asn228. Residue Glu71 participates in Mg(2+) binding. The active site involves Glu254.

This sequence belongs to the tubulin family. In terms of assembly, dimer of alpha and beta chains. A typical microtubule is a hollow water-filled tube with an outer diameter of 25 nm and an inner diameter of 15 nM. Alpha-beta heterodimers associate head-to-tail to form protofilaments running lengthwise along the microtubule wall with the beta-tubulin subunit facing the microtubule plus end conferring a structural polarity. Microtubules usually have 13 protofilaments but different protofilament numbers can be found in some organisms and specialized cells. It depends on Mg(2+) as a cofactor.

It localises to the cytoplasm. The protein resides in the cytoskeleton. It carries out the reaction GTP + H2O = GDP + phosphate + H(+). Its function is as follows. Tubulin is the major constituent of microtubules, a cylinder consisting of laterally associated linear protofilaments composed of alpha- and beta-tubulin heterodimers. Microtubules grow by the addition of GTP-tubulin dimers to the microtubule end, where a stabilizing cap forms. Below the cap, tubulin dimers are in GDP-bound state, owing to GTPase activity of alpha-tubulin. The chain is Tubulin alpha-1 chain (tubA) from Emericella nidulans (strain FGSC A4 / ATCC 38163 / CBS 112.46 / NRRL 194 / M139) (Aspergillus nidulans).